A 393-amino-acid chain; its full sequence is Probable acetyl-CoA acetyltransferase (393 aa).

The Acyl-thioester intermediate role is filled by C88. Catalysis depends on proton acceptor residues H349 and C379.

It belongs to the thiolase-like superfamily. Thiolase family.

It catalyses the reaction 2 acetyl-CoA = acetoacetyl-CoA + CoA. This is Probable acetyl-CoA acetyltransferase (fadA4) from Mycobacterium leprae (strain TN).